We begin with the raw amino-acid sequence, 137 residues long: Large ribosomal subunit protein eL28 (137 aa).

Residue Ser-2 is modified to N-acetylserine. Residues Lys-58 and Lys-65 each participate in a glycyl lysine isopeptide (Lys-Gly) (interchain with G-Cter in SUMO2) cross-link. Ser-115 carries the phosphoserine modification.

The protein belongs to the eukaryotic ribosomal protein eL28 family. Component of the large ribosomal subunit.

It is found in the cytoplasm. Its function is as follows. Component of the large ribosomal subunit. The ribosome is a large ribonucleoprotein complex responsible for the synthesis of proteins in the cell. This Homo sapiens (Human) protein is Large ribosomal subunit protein eL28 (RPL28).